The chain runs to 840 residues: Phosphatidylglycerol lysyltransferase (840 aa).

Over 1-8 (MNQEVKNK) the chain is Cytoplasmic. A helical transmembrane segment spans residues 9 to 29 (IFSILKITFATALFIFVAITL). At 30–52 (YRELSGINFKDTLVEFSKINRMS) the chain is on the extracellular side. The helical transmembrane segment at 53–73 (LVLLFIGGGASLVILSMYDVI) threads the bilayer. The Cytoplasmic segment spans residues 74–89 (LSRALKMDISLGKVLR). The helical transmembrane segment at 90–110 (VSYIINALNAIVGFGGFIGAG) threads the bilayer. Over 111 to 128 (VRAMVYKNYTHDKKKLVH) the chain is Extracellular. A helical transmembrane segment spans residues 129–149 (FISLILISMLTGLSLLSLLIV). The Cytoplasmic segment spans residues 150 to 161 (FHVFDASLILDK). A helical membrane pass occupies residues 162–182 (ITWVRWVLYVVSFFLPLFIIY). Topologically, residues 183-200 (SMVRPPDKNNRFVGLYCT) are extracellular. The helical transmembrane segment at 201–221 (LVSCVEWLAAAVVLYFCGVIV) threads the bilayer. Over 222–229 (DAHVSFMS) the chain is Cytoplasmic. A helical transmembrane segment spans residues 230 to 250 (FIAIFIIAALSGLVSFIPGGF). At 251 to 271 (GAFDLVVLLGFKTLGVPEEKV) the chain is on the extracellular side. A helical transmembrane segment spans residues 272–292 (LLMLLLYRFAYYFVPVIIALI). The Cytoplasmic portion of the chain corresponds to 293-337 (LSSFEFGTSAKKYIEGSKYFIPAKDVTSFLMSYQKDIIAKIPSLS). Residues 338-358 (LAILVFFTSMIFFVNNLTIVY) form a helical membrane-spanning segment. Topologically, residues 359-369 (DALYDGNHLTY) are extracellular. Residues 370 to 390 (YILLAIHTSACLLLLLNVVGI) form a helical membrane-spanning segment. The Cytoplasmic segment spans residues 391-394 (YKQS). Helical transmembrane passes span 395–415 (RRAI…TFFT) and 416–436 (YASY…IVAF). At 437-450 (RRARRLKRPVRMRN) the chain is on the cytoplasmic side. Residues 451–471 (IVAMLLFSLFILYVNHIFIAG) form a helical membrane-spanning segment. Over 472 to 489 (TLYALDIYTIEMHTSVLR) the chain is Extracellular. The helical transmembrane segment at 490–510 (YYFWLTILIIAIIIGMIAWLF) threads the bilayer. At 511–840 (DYQFSKVRIS…SKVMRVIRHK (330 aa)) the chain is on the cytoplasmic side.

The protein belongs to the LPG synthase family.

The protein resides in the cell membrane. It catalyses the reaction L-lysyl-tRNA(Lys) + a 1,2-diacyl-sn-glycero-3-phospho-(1'-sn-glycerol) = a 1,2-diacyl-sn-glycero-3-phospho-1'-(3'-O-L-lysyl)-sn-glycerol + tRNA(Lys). Catalyzes the transfer of a lysyl group from L-lysyl-tRNA(Lys) to membrane-bound phosphatidylglycerol (PG), which produces lysylphosphatidylglycerol (LPG), a major component of the bacterial membrane with a positive net charge. LPG synthesis contributes to bacterial virulence as it is involved in the resistance mechanism against cationic antimicrobial peptides (CAMP) produces by the host's immune system (defensins, cathelicidins) and by the competing microorganisms (bacteriocins). In fact, the modification of anionic phosphatidylglycerol with positively charged L-lysine results in repulsion of the peptides. This Staphylococcus aureus (strain COL) protein is Phosphatidylglycerol lysyltransferase (mprF).